Here is a 221-residue protein sequence, read N- to C-terminus: Toxin coregulated pilus biosynthesis protein P (221 aa).

A DNA-binding region (ompR/PhoB-type) is located at residues 5 to 109 (RVIYQFPDNL…VKLQGYRINI (105 aa)). Residues 143–163 (VVPYLVFSALYVALLPVIWWS) form a helical membrane-spanning segment.

Its subcellular location is the cell membrane. Functionally, involved in TCP pilus biogenesis. This chain is Toxin coregulated pilus biosynthesis protein P (tcpP), found in Vibrio cholerae serotype O1 (strain ATCC 39315 / El Tor Inaba N16961).